The sequence spans 115 residues: MNLMATLLTNTMLTSLMVLIAFWLPQTYTYSEKTSPYECGFDPMGSARLPFSMKFFLVAITFLLFDLEIALLLPLPWAIQANNTNLTLLMSFMLIILLAIGLAYEWLQKGLEWTK.

The next 3 helical transmembrane spans lie at 3–23 (LMAT…IAFW), 55–75 (FFLV…LLPL), and 86–106 (LTLL…AYEW).

Belongs to the complex I subunit 3 family. As to quaternary structure, core subunit of respiratory chain NADH dehydrogenase (Complex I) which is composed of 45 different subunits. Interacts with TMEM186. Interacts with TMEM242.

The protein localises to the mitochondrion inner membrane. It catalyses the reaction a ubiquinone + NADH + 5 H(+)(in) = a ubiquinol + NAD(+) + 4 H(+)(out). Its function is as follows. Core subunit of the mitochondrial membrane respiratory chain NADH dehydrogenase (Complex I) which catalyzes electron transfer from NADH through the respiratory chain, using ubiquinone as an electron acceptor. Essential for the catalytic activity of complex I. The protein is NADH-ubiquinone oxidoreductase chain 3 of Mammuthus primigenius (Siberian woolly mammoth).